Reading from the N-terminus, the 325-residue chain is MSRSALVGNITAMLEDAGFLVSDRCAIRPKSFDVAARRGEDLVLLKILGNVDALDRMTGAEMRRLGGYLDATPLVIGVRTRDEDLKPNVVYFRHGVPVLSPDTAMDLFVEGVPPLIYAAPGGLYVNIDGDLLADEREERGWSLGRLATELGVSRRTVSKYEDGMNASIEIAIQLEEVFDEPFSSPLEVMEGAESVRDSEPTPDDPDPDADDEHVVHILTRAGFTVHPTARAPFKAVGEDDDNRRGVMSLLTGHSSFTKSAKKRARIMSSLGEVTQTRAVYFTETDAKRDAVKGTALVSCAELDAVDDPAAIRDLIRERSQKPTEA.

One can recognise an HTH cro/C1-type domain in the interval 132–186 (LADEREERGWSLGRLATELGVSRRTVSKYEDGMNASIEIAIQLEEVFDEPFSSPL). The segment at residues 143–162 (LGRLATELGVSRRTVSKYED) is a DNA-binding region (H-T-H motif). The disordered stretch occupies residues 189–211 (MEGAESVRDSEPTPDDPDPDADD). The segment covering 200–211 (PTPDDPDPDADD) has biased composition (acidic residues).

This chain is Putative HTH-type transcriptional regulatory protein HQ_3058A, found in Haloquadratum walsbyi (strain DSM 16790 / HBSQ001).